A 201-amino-acid polypeptide reads, in one-letter code: Small ribosomal subunit protein uS4c (201 aa).

The interval 20 to 44 (GLTSKRPRAGSDLRNQSRSGKKSQY) is disordered. The region spanning 89–152 (MRLDNTLFRL…NSRTLVQNLL (64 aa)) is the S4 RNA-binding domain.

This sequence belongs to the universal ribosomal protein uS4 family. In terms of assembly, part of the 30S ribosomal subunit. Contacts protein S5. The interaction surface between S4 and S5 is involved in control of translational fidelity.

Its subcellular location is the plastid. It is found in the chloroplast. Its function is as follows. One of the primary rRNA binding proteins, it binds directly to 16S rRNA where it nucleates assembly of the body of the 30S subunit. Functionally, with S5 and S12 plays an important role in translational accuracy. This chain is Small ribosomal subunit protein uS4c (rps4), found in Aethionema grandiflorum (Persian stone-cress).